A 439-amino-acid polypeptide reads, in one-letter code: GTPase Obg (439 aa).

One can recognise an Obg domain in the interval methionine 1–leucine 159. The OBG-type G domain maps to alanine 160 to alanine 336. Residues glycine 166 to serine 173, phenylalanine 191 to serine 195, aspartate 213 to glycine 216, threonine 283 to aspartate 286, and serine 317 to isoleucine 319 each bind GTP. Positions 173 and 193 each coordinate Mg(2+). A disordered region spans residues alanine 338–tyrosine 357. Positions tyrosine 344–glutamate 354 are enriched in basic and acidic residues. The OCT domain occupies threonine 358–glutamate 439.

This sequence belongs to the TRAFAC class OBG-HflX-like GTPase superfamily. OBG GTPase family. In terms of assembly, monomer. Requires Mg(2+) as cofactor.

It is found in the cytoplasm. Functionally, an essential GTPase which binds GTP, GDP and possibly (p)ppGpp with moderate affinity, with high nucleotide exchange rates and a fairly low GTP hydrolysis rate. Plays a role in control of the cell cycle, stress response, ribosome biogenesis and in those bacteria that undergo differentiation, in morphogenesis control. The polypeptide is GTPase Obg (Leuconostoc mesenteroides subsp. mesenteroides (strain ATCC 8293 / DSM 20343 / BCRC 11652 / CCM 1803 / JCM 6124 / NCDO 523 / NBRC 100496 / NCIMB 8023 / NCTC 12954 / NRRL B-1118 / 37Y)).